The primary structure comprises 387 residues: Mannitol-1-phosphate 5-dehydrogenase (387 aa).

Position 3–14 (3–14) interacts with NAD(+); it reads ALHFGAGNIGRG.

Belongs to the mannitol dehydrogenase family.

It catalyses the reaction D-mannitol 1-phosphate + NAD(+) = beta-D-fructose 6-phosphate + NADH + H(+). The polypeptide is Mannitol-1-phosphate 5-dehydrogenase (Yersinia pseudotuberculosis serotype O:3 (strain YPIII)).